The sequence spans 443 residues: SAM50-like protein CG7639 (443 aa).

The POTRA domain occupies 23-101 (ARVDRVNVSG…QGYEVTFKGN (79 aa)).

Belongs to the SAM50/omp85 family. As to quaternary structure, associates with the mitochondrial contact site and cristae organizing system (MICOS) complex (also known as MINOS or MitOS complex).

The protein resides in the mitochondrion outer membrane. In terms of biological role, may play a role in the maintenance of the structure of mitochondrial cristae. The protein is SAM50-like protein CG7639 of Drosophila melanogaster (Fruit fly).